A 214-amino-acid polypeptide reads, in one-letter code: 3-demethoxyubiquinol 3-hydroxylase (214 aa).

Residues glutamate 63, glutamate 93, histidine 96, glutamate 145, glutamate 177, and histidine 180 each coordinate Fe cation.

Belongs to the COQ7 family. The cofactor is Fe cation.

Its subcellular location is the cell membrane. The enzyme catalyses a 5-methoxy-2-methyl-3-(all-trans-polyprenyl)benzene-1,4-diol + AH2 + O2 = a 3-demethylubiquinol + A + H2O. The protein operates within cofactor biosynthesis; ubiquinone biosynthesis. Functionally, catalyzes the hydroxylation of 2-nonaprenyl-3-methyl-6-methoxy-1,4-benzoquinol during ubiquinone biosynthesis. The sequence is that of 3-demethoxyubiquinol 3-hydroxylase from Nitrosococcus oceani (strain ATCC 19707 / BCRC 17464 / JCM 30415 / NCIMB 11848 / C-107).